Consider the following 473-residue polypeptide: Ribulose bisphosphate carboxylase large chain (473 aa).

A propeptide spanning residues 1–2 (MS) is cleaved from the precursor. Pro3 is subject to N-acetylproline. Lys14 carries the post-translational modification N6,N6,N6-trimethyllysine. Substrate is bound by residues Asn123 and Thr173. Lys175 functions as the Proton acceptor in the catalytic mechanism. Lys177 contributes to the substrate binding site. 3 residues coordinate Mg(2+): Lys201, Asp203, and Glu204. N6-carboxylysine is present on Lys201. His294 acts as the Proton acceptor in catalysis. Substrate-binding residues include Arg295, His327, and Ser379.

Belongs to the RuBisCO large chain family. Type I subfamily. As to quaternary structure, heterohexadecamer of 8 large chains and 8 small chains; disulfide-linked. The disulfide link is formed within the large subunit homodimers. Mg(2+) is required as a cofactor. Post-translationally, the disulfide bond which can form in the large chain dimeric partners within the hexadecamer appears to be associated with oxidative stress and protein turnover.

The protein resides in the plastid. The protein localises to the chloroplast. It catalyses the reaction 2 (2R)-3-phosphoglycerate + 2 H(+) = D-ribulose 1,5-bisphosphate + CO2 + H2O. The catalysed reaction is D-ribulose 1,5-bisphosphate + O2 = 2-phosphoglycolate + (2R)-3-phosphoglycerate + 2 H(+). In terms of biological role, ruBisCO catalyzes two reactions: the carboxylation of D-ribulose 1,5-bisphosphate, the primary event in carbon dioxide fixation, as well as the oxidative fragmentation of the pentose substrate in the photorespiration process. Both reactions occur simultaneously and in competition at the same active site. This chain is Ribulose bisphosphate carboxylase large chain, found in Vigna unguiculata (Cowpea).